The sequence spans 130 residues: ATP synthase epsilon chain, chloroplastic (130 aa).

This sequence belongs to the ATPase epsilon chain family. F-type ATPases have 2 components, CF(1) - the catalytic core - and CF(0) - the membrane proton channel. CF(1) has five subunits: alpha(3), beta(3), gamma(1), delta(1), epsilon(1). CF(0) has three main subunits: a, b and c.

The protein resides in the plastid. It is found in the chloroplast thylakoid membrane. Functionally, produces ATP from ADP in the presence of a proton gradient across the membrane. This is ATP synthase epsilon chain, chloroplastic from Emiliania huxleyi (Coccolithophore).